Reading from the N-terminus, the 421-residue chain is Transcription factor rglT (421 aa).

The tract at residues 1–29 (MQYEAYQWGQSHPTSTSGSMLQDTPTAAS) is disordered. The span at 8–29 (WGQSHPTSTSGSMLQDTPTAAS) shows a compositional bias: polar residues. The segment at residues 38 to 65 (CDECRKRKLKCSGEISGCSRCIKQSLSC) is a DNA-binding region (zn(2)-C6 fungal-type). The span at 346-357 (EARQRRWHESPD) shows a compositional bias: basic and acidic residues. The tract at residues 346 to 371 (EARQRRWHESPDSHPLPPDQRLNIPS) is disordered.

It is found in the nucleus. Its function is as follows. Transcription factor that is important for oxidative stress resistance and essential for gliotoxin (GT) self-protection through the regulation of a gene encoding a putative gliT homolog, even if E.nidulans does not produce gliotoxin itself. The sequence is that of Transcription factor rglT from Emericella nidulans (strain FGSC A4 / ATCC 38163 / CBS 112.46 / NRRL 194 / M139) (Aspergillus nidulans).